The chain runs to 443 residues: Serine--tRNA ligase (443 aa).

An L-serine-binding site is contributed by 250 to 252; that stretch reads TSE. 281-283 serves as a coordination point for ATP; it reads RSE. Position 304 (E304) interacts with L-serine. Residue 368–371 coordinates ATP; the sequence is EISS. Residue S403 participates in L-serine binding.

This sequence belongs to the class-II aminoacyl-tRNA synthetase family. Type-1 seryl-tRNA synthetase subfamily. Homodimer. The tRNA molecule binds across the dimer.

The protein localises to the cytoplasm. It catalyses the reaction tRNA(Ser) + L-serine + ATP = L-seryl-tRNA(Ser) + AMP + diphosphate + H(+). The enzyme catalyses tRNA(Sec) + L-serine + ATP = L-seryl-tRNA(Sec) + AMP + diphosphate + H(+). Its pathway is aminoacyl-tRNA biosynthesis; selenocysteinyl-tRNA(Sec) biosynthesis; L-seryl-tRNA(Sec) from L-serine and tRNA(Sec): step 1/1. Catalyzes the attachment of serine to tRNA(Ser). Is also able to aminoacylate tRNA(Sec) with serine, to form the misacylated tRNA L-seryl-tRNA(Sec), which will be further converted into selenocysteinyl-tRNA(Sec). This chain is Serine--tRNA ligase, found in Variovorax paradoxus (strain S110).